Reading from the N-terminus, the 90-residue chain is uncharacterized protein (90 aa).

A coiled-coil region spans residues 36–82; sequence DQEYSDAQMQLEDAVNALNKLWLSSNDQQREQLYRMRLQLQSLQNNM.

This is an uncharacterized protein from Bacillus subtilis (strain 168).